A 190-amino-acid chain; its full sequence is Crossover junction endodeoxyribonuclease RuvC (190 aa).

Catalysis depends on residues Asp-8, Glu-67, and Asp-139. Positions 8, 67, and 139 each coordinate Mg(2+).

Belongs to the RuvC family. As to quaternary structure, homodimer which binds Holliday junction (HJ) DNA. The HJ becomes 2-fold symmetrical on binding to RuvC with unstacked arms; it has a different conformation from HJ DNA in complex with RuvA. In the full resolvosome a probable DNA-RuvA(4)-RuvB(12)-RuvC(2) complex forms which resolves the HJ. Mg(2+) serves as cofactor.

The protein localises to the cytoplasm. It carries out the reaction Endonucleolytic cleavage at a junction such as a reciprocal single-stranded crossover between two homologous DNA duplexes (Holliday junction).. Functionally, the RuvA-RuvB-RuvC complex processes Holliday junction (HJ) DNA during genetic recombination and DNA repair. Endonuclease that resolves HJ intermediates. Cleaves cruciform DNA by making single-stranded nicks across the HJ at symmetrical positions within the homologous arms, yielding a 5'-phosphate and a 3'-hydroxyl group; requires a central core of homology in the junction. The consensus cleavage sequence is 5'-(A/T)TT(C/G)-3'. Cleavage occurs on the 3'-side of the TT dinucleotide at the point of strand exchange. HJ branch migration catalyzed by RuvA-RuvB allows RuvC to scan DNA until it finds its consensus sequence, where it cleaves and resolves the cruciform DNA. The polypeptide is Crossover junction endodeoxyribonuclease RuvC (Pasteurella multocida (strain Pm70)).